Reading from the N-terminus, the 456-residue chain is Aromatic amino acid transport protein AroP (456 aa).

At 1–18 (MEGQQHGEQLKRGLKNRH) the chain is on the cytoplasmic side. The helical transmembrane segment at 19–39 (IQLIALGGAIGTGLFLGSASV) threads the bilayer. The Periplasmic segment spans residues 40–41 (IQ). A helical membrane pass occupies residues 42 to 62 (SAGPGIILGYAIAGFIAFLIM). Residues 63 to 85 (RQLGEMVVEEPVAGSFSHFAYKY) are Cytoplasmic-facing. A helical transmembrane segment spans residues 86–106 (WGSFAGFASGWNYWVLYVLVA). Residues 107–116 (MAELTAVGKY) lie on the Periplasmic side of the membrane. The chain crosses the membrane as a helical span at residues 117-137 (IQFWYPEIPTWVSAAVFFVVI). Residues 138–154 (NAINLTNVKVFGEMEFW) lie on the Cytoplasmic side of the membrane. Residues 155-175 (FAIIKVIAVVAMIIFGAWLLF) traverse the membrane as a helical segment. Topologically, residues 176 to 200 (SGNGGPQASVSNLWDQGGFLPHGFT) are periplasmic. Residues 201–221 (GLVMMMAIIMFSFGGLELVGI) form a helical membrane-spanning segment. Over 222 to 239 (TAAEADNPEQSIPKATNQ) the chain is Cytoplasmic. A helical transmembrane segment spans residues 240–260 (VIYRILIFYIGSLAVLLSLMP). Over 261 to 270 (WTRVTADTSP) the chain is Periplasmic. A helical membrane pass occupies residues 271–291 (FVLIFHELGDTFVANALNIVV). Residues 292–332 (LTAALSVYNSCVYCNSRMLFGLAQQGNAPKALASVDKRGVP) are Cytoplasmic-facing. Residues 333 to 353 (VNTILVSALVTALCVLINYLA) form a helical membrane-spanning segment. Residues 354–357 (PESA) are Periplasmic-facing. A helical membrane pass occupies residues 358–378 (FGLLMALVVSALVINWAMISL). The Cytoplasmic portion of the chain corresponds to 379–398 (AHMKFRRAKQEQGVVTRFPA). The chain crosses the membrane as a helical span at residues 399–419 (LLYPLGNWICLLFMAAVLVIM). Residues 420–424 (LMTPG) lie on the Periplasmic side of the membrane. A helical transmembrane segment spans residues 425–445 (MAISVYLIPVWLIVLGIGYLF). Topologically, residues 446-456 (KEKTAKAVKAH) are cytoplasmic.

It belongs to the amino acid-polyamine-organocation (APC) superfamily. Amino acid transporter (AAT) (TC 2.A.3.1) family.

Its subcellular location is the cell inner membrane. The catalysed reaction is L-phenylalanine(in) + H(+)(in) = L-phenylalanine(out) + H(+)(out). It carries out the reaction L-tryptophan(in) + H(+)(in) = L-tryptophan(out) + H(+)(out). It catalyses the reaction L-tyrosine(in) + H(+)(in) = L-tyrosine(out) + H(+)(out). Functionally, permease that is involved in the active transport across the cytoplasmic membrane of all three aromatic amino acids, phenylalanine, tyrosine and tryptophan. This is Aromatic amino acid transport protein AroP (aroP) from Escherichia coli O6:H1 (strain CFT073 / ATCC 700928 / UPEC).